The chain runs to 291 residues: tRNA dimethylallyltransferase (291 aa).

5-12 (GPTAGGKS) is an ATP binding site. 7-12 (TAGGKS) contributes to the substrate binding site. Positions 30-33 (DSMQ) are interaction with substrate tRNA.

Belongs to the IPP transferase family. Monomer. Mg(2+) serves as cofactor.

It catalyses the reaction adenosine(37) in tRNA + dimethylallyl diphosphate = N(6)-dimethylallyladenosine(37) in tRNA + diphosphate. In terms of biological role, catalyzes the transfer of a dimethylallyl group onto the adenine at position 37 in tRNAs that read codons beginning with uridine, leading to the formation of N6-(dimethylallyl)adenosine (i(6)A). The chain is tRNA dimethylallyltransferase from Frankia casuarinae (strain DSM 45818 / CECT 9043 / HFP020203 / CcI3).